Here is a 539-residue protein sequence, read N- to C-terminus: Chitin deacetylase 1 (539 aa).

Residues 1–23 form the signal peptide; that stretch reads MARYARVATLAACLLFACALADG. In terms of domain architecture, Chitin-binding type-2 spans 42–104; that stretch reads QELCKDKDAG…WKDAVKNCKL (63 aa). Intrachain disulfides connect Cys-80-Cys-93, Cys-122-Cys-134, Cys-129-Cys-147, Cys-141-Cys-156, Cys-168-Cys-180, and Cys-173-Cys-178. The 37-residue stretch at 121 to 157 folds into the LDL-receptor class A domain; that stretch reads LCQDGFLACGDSTCIERGLFCNGEKDCGDGSDENSCD. Asp-206 contacts Zn(2+). 5 disulfides stabilise this stretch: Cys-230/Cys-489, Cys-354/Cys-361, Cys-391/Cys-397, Cys-497/Cys-520, and Cys-503/Cys-523. N-linked (GlcNAc...) asparagine glycosylation is present at Asn-244. Residues His-261 and His-265 each contribute to the Zn(2+) site. N-linked (GlcNAc...) asparagine glycosylation occurs at Asn-296.

Belongs to the carbohydrate esterase 4 (CE4) family. As to quaternary structure, interacts with CPAP3-A1. Requires Zn(2+) as cofactor. As to expression, highly expressed in epidermis and head. Moderate expression levels in fat body, Malpighian tubule, testis and midgut. Low expression in silk gland and ovary.

The protein localises to the secreted. It catalyses the reaction [(1-&gt;4)-N-acetyl-beta-D-glucosaminyl](n) + n H2O = chitosan + n acetate. Its activity is regulated as follows. Binding to the accessory protein CPAP3-A1 is essential for chitinase activity. In terms of biological role, hydrolyzes the N-acetamido groups of N-acetyl-D-glucosamine residues in chitin. The polypeptide is Chitin deacetylase 1 (Bombyx mori (Silk moth)).